A 459-amino-acid chain; its full sequence is Phosphomethylpyrimidine synthase (459 aa).

Substrate-binding positions include Asn80, Met109, Tyr139, His175, Ser195–Gly197, Asp236–Arg239, and Glu275. Position 279 (His279) interacts with Zn(2+). Position 302 (Tyr302) interacts with substrate. His343 is a binding site for Zn(2+). [4Fe-4S] cluster-binding residues include Cys423, Cys426, and Cys431.

This sequence belongs to the ThiC family. [4Fe-4S] cluster serves as cofactor.

The catalysed reaction is 5-amino-1-(5-phospho-beta-D-ribosyl)imidazole + S-adenosyl-L-methionine = 4-amino-2-methyl-5-(phosphooxymethyl)pyrimidine + CO + 5'-deoxyadenosine + formate + L-methionine + 3 H(+). It participates in cofactor biosynthesis; thiamine diphosphate biosynthesis. Catalyzes the synthesis of the hydroxymethylpyrimidine phosphate (HMP-P) moiety of thiamine from aminoimidazole ribotide (AIR) in a radical S-adenosyl-L-methionine (SAM)-dependent reaction. In Synechocystis sp. (strain ATCC 27184 / PCC 6803 / Kazusa), this protein is Phosphomethylpyrimidine synthase.